Consider the following 215-residue polypeptide: Pyrrolidone-carboxylate peptidase (215 aa).

Residues glutamate 80, cysteine 143, and histidine 167 contribute to the active site.

This sequence belongs to the peptidase C15 family. Homotetramer.

The protein resides in the cytoplasm. The catalysed reaction is Release of an N-terminal pyroglutamyl group from a polypeptide, the second amino acid generally not being Pro.. In terms of biological role, removes 5-oxoproline from various penultimate amino acid residues except L-proline. This chain is Pyrrolidone-carboxylate peptidase, found in Yersinia pestis bv. Antiqua (strain Antiqua).